Reading from the N-terminus, the 233-residue chain is Ribonuclease 3 (233 aa).

One can recognise an RNase III domain in the interval 4-126; it reads LNKLMERLGH…IVGAIYIDAG (123 aa). A Mg(2+)-binding site is contributed by Glu39. Asp43 is an active-site residue. Mg(2+) is bound by residues Asp112 and Glu115. Residue Glu115 is part of the active site. Residues 153–222 form the DRBM domain; sequence DAKSLLQEWL…AKRFLELLDD (70 aa).

It belongs to the ribonuclease III family. Homodimer. Mg(2+) serves as cofactor.

The protein resides in the cytoplasm. The enzyme catalyses Endonucleolytic cleavage to 5'-phosphomonoester.. Functionally, digests double-stranded RNA. Involved in the processing of primary rRNA transcript to yield the immediate precursors to the large and small rRNAs (23S and 16S). Processes some mRNAs, and tRNAs when they are encoded in the rRNA operon. Processes pre-crRNA and tracrRNA of type II CRISPR loci if present in the organism. In Coxiella burnetii (strain RSA 331 / Henzerling II), this protein is Ribonuclease 3.